A 500-amino-acid polypeptide reads, in one-letter code: Phenylalanine--tRNA ligase alpha subunit (500 aa).

L-phenylalanine-binding positions include Thr-343, 382-384 (QID), and Phe-423. Mg(2+) is bound at residue Glu-425. Residue Phe-448 coordinates L-phenylalanine.

It belongs to the class-II aminoacyl-tRNA synthetase family. Phe-tRNA synthetase alpha subunit type 2 subfamily. As to quaternary structure, tetramer of two alpha and two beta subunits. The cofactor is Mg(2+).

It is found in the cytoplasm. It catalyses the reaction tRNA(Phe) + L-phenylalanine + ATP = L-phenylalanyl-tRNA(Phe) + AMP + diphosphate + H(+). The sequence is that of Phenylalanine--tRNA ligase alpha subunit from Pyrococcus abyssi (strain GE5 / Orsay).